A 227-amino-acid chain; its full sequence is MVKGIFITATGTDIGKTYITALIVKKLREFNINCGYYKAALSGAERIDGKLIAGDANYVYNIADIKGDPNDAVSYIFEQAVSPHLAAKLNNVEISMEKIKKDFSYIKNKHDYITVEGSGGIICPISMGKEKIMLENIIKSFKLPAIVVADAGLGTINSTILTLQYIKEKNISVKMILLNNYNHEDIIHIENKRYLSDNLPIPVYTCNKNSNNLEIPAEKLIEYYEEI.

13–18 is an ATP binding site; the sequence is DIGKTY. Thr-17 lines the Mg(2+) pocket. Residue Lys-38 is part of the active site. Substrate is bound at residue Ser-42. Residues Asp-55, 116–119, and 179–180 each bind ATP; these read EGSG and NN. Positions 55 and 116 each coordinate Mg(2+).

This sequence belongs to the dethiobiotin synthetase family. In terms of assembly, homodimer. It depends on Mg(2+) as a cofactor.

Its subcellular location is the cytoplasm. It catalyses the reaction (7R,8S)-7,8-diammoniononanoate + CO2 + ATP = (4R,5S)-dethiobiotin + ADP + phosphate + 3 H(+). It functions in the pathway cofactor biosynthesis; biotin biosynthesis; biotin from 7,8-diaminononanoate: step 1/2. Its function is as follows. Catalyzes a mechanistically unusual reaction, the ATP-dependent insertion of CO2 between the N7 and N8 nitrogen atoms of 7,8-diaminopelargonic acid (DAPA, also called 7,8-diammoniononanoate) to form a ureido ring. This is ATP-dependent dethiobiotin synthetase BioD from Clostridium botulinum (strain 657 / Type Ba4).